Here is a 451-residue protein sequence, read N- to C-terminus: uncharacterized protein (451 aa).

The Mn(2+) site is built by D305, D316, H384, E414, and E428.

The protein belongs to the peptidase M24B family. Mn(2+) is required as a cofactor.

This is an uncharacterized protein from Schizosaccharomyces pombe (strain 972 / ATCC 24843) (Fission yeast).